Here is a 152-residue protein sequence, read N- to C-terminus: Ubiquitin-conjugating enzyme E2 W (152 aa).

Residue methionine 1 forms a Peptide (Met-Gly) (interchain with G-Cter in ubiquitin) linkage. One can recognise a UBC core domain in the interval 4-152 (AATRRLMKEL…TRWWFHDDSV (149 aa)). Catalysis depends on cysteine 92, which acts as the Glycyl thioester intermediate.

Belongs to the ubiquitin-conjugating enzyme family.

The catalysed reaction is S-ubiquitinyl-[E1 ubiquitin-activating enzyme]-L-cysteine + [E2 ubiquitin-conjugating enzyme]-L-cysteine = [E1 ubiquitin-activating enzyme]-L-cysteine + S-ubiquitinyl-[E2 ubiquitin-conjugating enzyme]-L-cysteine.. The enzyme catalyses S-ubiquitinyl-[E1 ubiquitin-activating enzyme]-L-cysteine + [acceptor protein]-N-terminal-amino acid = [E1 ubiquitin-activating enzyme]-L-cysteine + N-terminal-ubiquitinyl-[acceptor protein].. It functions in the pathway protein modification; protein ubiquitination. Functionally, accepts ubiquitin from the E1 complex and catalyzes its covalent attachment to other proteins. Together with ubc-18, required for the ubiquitination of membranous organelles, and the removal of paternal mitochondria from early embryos. The sequence is that of Ubiquitin-conjugating enzyme E2 W from Caenorhabditis elegans.